Reading from the N-terminus, the 65-residue chain is Large ribosomal subunit protein bL35 (65 aa).

The disordered stretch occupies residues 1–47 (MPKIKTNRGAAKRFRKTASGKIKRNSAFTSHILTSKTRKRKRQLRSS). Basic residues predominate over residues 10-24 (AAKRFRKTASGKIKR). A compositionally biased stretch (polar residues) spans 26–35 (SAFTSHILTS).

This sequence belongs to the bacterial ribosomal protein bL35 family.

The protein is Large ribosomal subunit protein bL35 of Geobacter metallireducens (strain ATCC 53774 / DSM 7210 / GS-15).